The sequence spans 463 residues: Fumarate hydratase class II (463 aa).

Substrate is bound by residues 97-99, 128-131, 138-140, and Thr-186; these read SGT, HPND, and SSN. His-187 (proton donor/acceptor) is an active-site residue. The active site involves Ser-317. Substrate contacts are provided by residues Ser-318 and 323–325; that span reads KVN.

Belongs to the class-II fumarase/aspartase family. Fumarase subfamily. In terms of assembly, homotetramer.

The protein localises to the cytoplasm. It carries out the reaction (S)-malate = fumarate + H2O. It functions in the pathway carbohydrate metabolism; tricarboxylic acid cycle; (S)-malate from fumarate: step 1/1. Involved in the TCA cycle. Catalyzes the stereospecific interconversion of fumarate to L-malate. This is Fumarate hydratase class II from Campylobacter jejuni subsp. jejuni serotype O:2 (strain ATCC 700819 / NCTC 11168).